We begin with the raw amino-acid sequence, 504 residues long: Histidine--tRNA ligase (504 aa).

The protein belongs to the class-II aminoacyl-tRNA synthetase family. As to quaternary structure, homodimer.

The protein localises to the cytoplasm. It carries out the reaction tRNA(His) + L-histidine + ATP = L-histidyl-tRNA(His) + AMP + diphosphate + H(+). In Rhizobium meliloti (strain 1021) (Ensifer meliloti), this protein is Histidine--tRNA ligase (hisS).